Here is a 187-residue protein sequence, read N- to C-terminus: Peptide deformylase (187 aa).

2 residues coordinate Fe cation: C107 and H149. E150 is a catalytic residue. H153 provides a ligand contact to Fe cation.

It belongs to the polypeptide deformylase family. Requires Fe(2+) as cofactor.

The catalysed reaction is N-terminal N-formyl-L-methionyl-[peptide] + H2O = N-terminal L-methionyl-[peptide] + formate. In terms of biological role, removes the formyl group from the N-terminal Met of newly synthesized proteins. Requires at least a dipeptide for an efficient rate of reaction. N-terminal L-methionine is a prerequisite for activity but the enzyme has broad specificity at other positions. This Picosynechococcus sp. (strain ATCC 27264 / PCC 7002 / PR-6) (Agmenellum quadruplicatum) protein is Peptide deformylase.